The sequence spans 783 residues: Endonuclease MutS2 (783 aa).

337-344 (GPNTGGKT) serves as a coordination point for ATP. The Smr domain maps to 708-783 (LHLRGYRYEE…GFGVTVAELK (76 aa)).

Belongs to the DNA mismatch repair MutS family. MutS2 subfamily. Homodimer. Binds to stalled ribosomes, contacting rRNA.

Its function is as follows. Endonuclease that is involved in the suppression of homologous recombination and thus may have a key role in the control of bacterial genetic diversity. In terms of biological role, acts as a ribosome collision sensor, splitting the ribosome into its 2 subunits. Detects stalled/collided 70S ribosomes which it binds and splits by an ATP-hydrolysis driven conformational change. Acts upstream of the ribosome quality control system (RQC), a ribosome-associated complex that mediates the extraction of incompletely synthesized nascent chains from stalled ribosomes and their subsequent degradation. Probably generates substrates for RQC. The polypeptide is Endonuclease MutS2 (Staphylococcus haemolyticus (strain JCSC1435)).